The primary structure comprises 187 residues: UPF0301 protein YqgE (187 aa).

The protein belongs to the UPF0301 (AlgH) family.

The polypeptide is UPF0301 protein YqgE (Salmonella paratyphi B (strain ATCC BAA-1250 / SPB7)).